The primary structure comprises 2052 residues: Unconventional myosin-X (2052 aa).

Met-1 carries the post-translational modification N-acetylmethionine. The region spanning 63–739 (EGVDDMATLT…LEQKLEKRQE (677 aa)) is the Myosin motor domain. Residues Asn-104, Tyr-113, 160–165 (GAGKTE), and Asn-215 contribute to the ATP site. The tract at residues 619–641 (LHSLMATLSASNPFFVRCIKPNM) is actin-binding. IQ domains are found at residues 742-763 (VTRA…KQYK), 764-787 (KVLD…RFLH), and 788-817 (LKKA…EKRA). The interval 814 to 884 (EKRAEEEKRK…LSRELEKQKE (71 aa)) is SAH. The tract at residues 819–843 (EEKRKREEEEKRKREEEERERERER) is disordered. The stretch at 885-935 (NKQVEEILRLEKEIEDLQRMKERQELSLTEASLQKLQQLRDEELRRLEDEA) forms a coiled coil. Residues Ser-963 and Ser-966 each carry the phosphoserine modification. Residues 964–1093 (VGSGCTGEQG…DYDQDDYEDG (130 aa)) are disordered. Residues 988–1003 (PEEEEVDEGFEADDDA) are compositionally biased toward acidic residues. A compositionally biased stretch (polar residues) spans 1040 to 1049 (VVPTSPSADS). Residues 1081-1092 (GDYDYDQDDYED) show a composition bias toward acidic residues. Thr-1152 carries the phosphothreonine modification. 2 consecutive PH domains span residues 1206 to 1304 (EALK…QVHA) and 1386 to 1491 (EFIV…NVTD). Positions 1541-1689 (LPYGDINLNL…PSRDEIEALI (149 aa)) constitute a MyTH4 domain. In terms of domain architecture, FERM spans 1694-2038 (MTSTVHCHGG…AYISMIVKKR (345 aa)).

The protein belongs to the TRAFAC class myosin-kinesin ATPase superfamily. Myosin family. Monomer, when in an inactive conformation in the cytosol. Homodimer in its active, membrane-bound conformation; antiparallel coiled coil-mediated dimer formation. Interacts with ECPAS. Interacts with NEO 1. Interacts with VASP. Interacts with DCC and ITGB5; the presence of DCC inhibits ITGB5 binding. Interacts with tubulin; ITGB5 or DCC binding inhibits tubulin binding. Interacts strongly with CALM3 and weakly with CALM, the CALM3 interaction is essential for function in filopodial extension and motility. Interacts with ITGB1, ITGB3 and ITGB5. As to expression, detected in kidney, testis, liver, kidney, cerebellum and brain cortex (at protein level).

It is found in the cytoplasm. The protein localises to the cytosol. The protein resides in the cell projection. It localises to the lamellipodium. Its subcellular location is the ruffle. It is found in the cytoskeleton. The protein localises to the filopodium tip. The protein resides in the cell cortex. It localises to the filopodium membrane. Functionally, myosins are actin-based motor molecules with ATPase activity. Unconventional myosins serve in intracellular movements. MYO10 binds to actin filaments and actin bundles and functions as a plus end-directed motor. Moves with higher velocity and takes larger steps on actin bundles than on single actin filaments. The tail domain binds to membranous compartments containing phosphatidylinositol 3,4,5-trisphosphate, which are then moved relative to actin filaments. Regulates cell shape, cell spreading and cell adhesion. Stimulates the formation and elongation of filopodia. In hippocampal neurons it induces the formation of dendritic filopodia by trafficking the actin-remodeling protein VASP to the tips of filopodia, where it promotes actin elongation. Plays a role in formation of the podosome belt in osteoclasts. In Bos taurus (Bovine), this protein is Unconventional myosin-X (MYO10).